We begin with the raw amino-acid sequence, 149 residues long: MKCPFCSSEDTKVVDSRTTIDGSTKRRRECNNCLKRFSTYERFEESPIYVVKKDNRRVKYDREKLLRGLTFATAKRNVSREELDKIITDIERSLQNSLISEISSKDLGEKVLEKLRELDQVAYVRFASVYKEFDDIKSFIEIVEEIKKD.

A zinc finger lies at 3-33; it reads CPFCSSEDTKVVDSRTTIDGSTKRRRECNNC. The region spanning 48–138 is the ATP-cone domain; sequence IYVVKKDNRR…VYKEFDDIKS (91 aa).

It belongs to the NrdR family. The cofactor is Zn(2+).

Functionally, negatively regulates transcription of bacterial ribonucleotide reductase nrd genes and operons by binding to NrdR-boxes. The sequence is that of Transcriptional repressor NrdR from Fusobacterium nucleatum subsp. nucleatum (strain ATCC 25586 / DSM 15643 / BCRC 10681 / CIP 101130 / JCM 8532 / KCTC 2640 / LMG 13131 / VPI 4355).